Consider the following 241-residue polypeptide: Methylthioribulose-1-phosphate dehydratase (241 aa).

Residues 1 to 20 are disordered; that stretch reads MSAIKDERNNDHLVQSHDPE. Cys-100 contacts substrate. Zn(2+) is bound by residues His-117 and His-119. Glu-146 acts as the Proton donor/acceptor in catalysis. His-202 lines the Zn(2+) pocket.

It belongs to the aldolase class II family. MtnB subfamily. Zn(2+) is required as a cofactor.

Its subcellular location is the cytoplasm. It carries out the reaction 5-(methylsulfanyl)-D-ribulose 1-phosphate = 5-methylsulfanyl-2,3-dioxopentyl phosphate + H2O. The protein operates within amino-acid biosynthesis; L-methionine biosynthesis via salvage pathway; L-methionine from S-methyl-5-thio-alpha-D-ribose 1-phosphate: step 2/6. In terms of biological role, catalyzes the dehydration of methylthioribulose-1-phosphate (MTRu-1-P) into 2,3-diketo-5-methylthiopentyl-1-phosphate (DK-MTP-1-P). The polypeptide is Methylthioribulose-1-phosphate dehydratase (Blastomyces gilchristii (strain SLH14081) (Blastomyces dermatitidis)).